Consider the following 163-residue polypeptide: D-aminoacyl-tRNA deacylase (163 aa).

The Gly-cisPro motif, important for rejection of L-amino acids motif lies at 141 to 142 (GP).

The protein belongs to the DTD family. As to quaternary structure, homodimer.

It is found in the cytoplasm. The catalysed reaction is glycyl-tRNA(Ala) + H2O = tRNA(Ala) + glycine + H(+). It carries out the reaction a D-aminoacyl-tRNA + H2O = a tRNA + a D-alpha-amino acid + H(+). An aminoacyl-tRNA editing enzyme that deacylates mischarged D-aminoacyl-tRNAs. Also deacylates mischarged glycyl-tRNA(Ala), protecting cells against glycine mischarging by AlaRS. Acts via tRNA-based rather than protein-based catalysis; rejects L-amino acids rather than detecting D-amino acids in the active site. By recycling D-aminoacyl-tRNA to D-amino acids and free tRNA molecules, this enzyme counteracts the toxicity associated with the formation of D-aminoacyl-tRNA entities in vivo and helps enforce protein L-homochirality. The protein is D-aminoacyl-tRNA deacylase of Neisseria meningitidis serogroup B (strain ATCC BAA-335 / MC58).